Consider the following 476-residue polypeptide: Proline--tRNA ligase 2 (476 aa).

This sequence belongs to the class-II aminoacyl-tRNA synthetase family. ProS type 3 subfamily. In terms of assembly, homodimer.

It localises to the cytoplasm. It catalyses the reaction tRNA(Pro) + L-proline + ATP = L-prolyl-tRNA(Pro) + AMP + diphosphate. Catalyzes the attachment of proline to tRNA(Pro) in a two-step reaction: proline is first activated by ATP to form Pro-AMP and then transferred to the acceptor end of tRNA(Pro). This is Proline--tRNA ligase 2 from Bacillus cereus (strain ATCC 14579 / DSM 31 / CCUG 7414 / JCM 2152 / NBRC 15305 / NCIMB 9373 / NCTC 2599 / NRRL B-3711).